Consider the following 154-residue polypeptide: Interleukin-2 (154 aa).

An N-terminal signal peptide occupies residues 1–20; it reads MYKLQFLSCIALTLALVANS. T23 carries O-linked (GalNAc...) threonine glycosylation. C78 and C126 are joined by a disulfide. N111 carries N-linked (GlcNAc...) asparagine glycosylation.

The protein belongs to the IL-2 family.

It is found in the secreted. Its function is as follows. Cytokine produced by activated CD4-positive helper T-cells and to a lesser extend activated CD8-positive T-cells and natural killer (NK) cells that plays pivotal roles in the immune response and tolerance. Binds to a receptor complex composed of either the high-affinity trimeric IL-2R (IL2RA/CD25, IL2RB/CD122 and IL2RG/CD132) or the low-affinity dimeric IL-2R (IL2RB and IL2RG). Interaction with the receptor leads to oligomerization and conformation changes in the IL-2R subunits resulting in downstream signaling starting with phosphorylation of JAK1 and JAK3. In turn, JAK1 and JAK3 phosphorylate the receptor to form a docking site leading to the phosphorylation of several substrates including STAT5. This process leads to activation of several pathways including STAT, phosphoinositide-3-kinase/PI3K and mitogen-activated protein kinase/MAPK pathways. Functions as a T-cell growth factor and can increase NK-cell cytolytic activity as well. Promotes strong proliferation of activated B-cells and subsequently immunoglobulin production. Plays a pivotal role in regulating the adaptive immune system by controlling the survival and proliferation of regulatory T-cells, which are required for the maintenance of immune tolerance. Moreover, participates in the differentiation and homeostasis of effector T-cell subsets, including Th1, Th2, Th17 as well as memory CD8-positive T-cells. This chain is Interleukin-2 (IL2), found in Camelus bactrianus (Bactrian camel).